Consider the following 130-residue polypeptide: Small ribosomal subunit protein uS9 (130 aa).

The protein belongs to the universal ribosomal protein uS9 family.

The chain is Small ribosomal subunit protein uS9 from Teredinibacter turnerae (strain ATCC 39867 / T7901).